The following is a 125-amino-acid chain: Small ribosomal subunit protein uS12 (125 aa).

The interval 1-26 (MPTINQLVRKSRKTVKAQSDSPALKN) is disordered. At D89 the chain carries 3-methylthioaspartic acid.

It belongs to the universal ribosomal protein uS12 family. In terms of assembly, part of the 30S ribosomal subunit. Contacts proteins S8 and S17. May interact with IF1 in the 30S initiation complex.

Its function is as follows. With S4 and S5 plays an important role in translational accuracy. Interacts with and stabilizes bases of the 16S rRNA that are involved in tRNA selection in the A site and with the mRNA backbone. Located at the interface of the 30S and 50S subunits, it traverses the body of the 30S subunit contacting proteins on the other side and probably holding the rRNA structure together. The combined cluster of proteins S8, S12 and S17 appears to hold together the shoulder and platform of the 30S subunit. The polypeptide is Small ribosomal subunit protein uS12 (Clostridium tetani (strain Massachusetts / E88)).